The primary structure comprises 284 residues: MATNQSIKNNIQKKQKNVPVQQQGATMKGLLSSPSVIKRFEEVLGKRATQFTASILSLYNSEQMLQKTDPMSVISSAMVAATLDLPIDKNLGYAWIVPYGGKAQFQLGYKGYIQLALRTGQYKSINCIPIHEGELQKWNPLTEEIEIDFEKRESDAVIGYAAYFELINGFRKTVYWTKAQVEKHKKKFSKSDFGWKNDWDAMALKTVLKAVLSKWGILSVEMQKAVIEEDETRERIDITNEADSSEIIDSEPSNKDETEKPSAQETDPFDGKPVDIKDDELPFD.

Residues 236–284 (IDITNEADSSEIIDSEPSNKDETEKPSAQETDPFDGKPVDIKDDELPFD) are disordered. Composition is skewed to basic and acidic residues over residues 252 to 262 (PSNKDETEKPS) and 269 to 284 (FDGK…LPFD).

This is an uncharacterized protein from Bacillus subtilis (strain 168).